Here is a 549-residue protein sequence, read N- to C-terminus: MSSFYSEPYYSTSYKRRYVETPRVHISSVRSGYSTARSAYSSYSAPVSSSLSVRRSYSSSSGLMPSLENLDLSQVAAISNDLKSIRTQEKAQLQDLNDRFASFIERVHELEQQNKVLEAQLLVLRQKHSEPSRFRALYEQEIRDLRLAAEDATNEKQALQGEREGLEETLRNLQARYEEEVLSREDAEGRLMEARKGADEAALARAELEKRIDSLMDEIAFLKKVHEEEIAELQAQIQYAQISVEMDVSSKPDLSAALKDIRAQYEKLAAKNMQNAEEWFKSRFTVLTESAAKNTDAVRAAKDEVSESRRLLKAKTLEIEACRGMNEALEKQLQELEDKQNADISAMQDTINKLENELRTTKSEMARYLKEYQDLLNVKMALDIEIAAYRKLLEGEETRLSFTSVGSLTTGYSQSSQVFGRSAYGGLQTSSYLMSTRSFPSYYTSHVQEEQIEVEETIEAAKAEEAKDEPPSEGEAEEEGKEKEEAEAEAEAEEEGAQEEEEAAEKEESEEAKEEEGGEGEQGEETKEAEEEEKKDEGAGEEQATKKKD.

Position 2 is an N-acetylserine (Ser2). Residues Ser2–Gln92 form a head region. Residue Thr21 is glycosylated (O-linked (GlcNAc) threonine). Arg23 carries the asymmetric dimethylarginine; alternate modification. Arg23 carries the omega-N-methylarginine; alternate modification. An O-linked (GlcNAc) serine glycan is attached at Ser27. An Omega-N-methylarginine modification is found at Arg30. Position 43 is a phosphotyrosine (Tyr43). Phosphoserine is present on residues Ser56, Ser66, and Ser102. The IF rod domain maps to Glu89–Leu400. The tract at residues Leu93 to Leu124 is coil 1A. The interval Arg125–Leu137 is linker 1. The tract at residues Tyr138–Leu233 is coil 1B. The linker 12 stretch occupies residues Gln234–Pro252. The segment at Asp253–Lys271 is coil 2A. The linker 2 stretch occupies residues Asn272–Phe280. Residues Lys281 to Glu396 are coil 2B. An epitope; recognized by IF-specific monoclonal antibody region spans residues Ala381–Lys391. The segment at Glu397 to Tyr443 is tail, subdomain A. Residues Glu397 to Asp549 form a tail region. Residues Thr444 to Asp549 are tail, subdomain B (acidic). Positions Lys462–Asp549 are disordered. The segment covering Pro471–Lys534 has biased composition (acidic residues). Ser472 is modified (phosphoserine). Residue Thr526 is modified to Phosphothreonine. Over residues Lys535–Asp549 the composition is skewed to basic and acidic residues.

It belongs to the intermediate filament family. In terms of assembly, forms homodimers (in vitro). Forms heterodimers with NEFH or NEFM; which can further hetero-oligomerize (in vitro). Forms heterodimers with INA (in vitro). Interacts with ARHGEF28. Interacts with TRIM2. In terms of processing, O-glycosylated. Phosphorylated in the head and rod regions by the PKC kinase PKN1, leading to the inhibition of polymerization. Post-translationally, ubiquitinated in the presence of TRIM2 and UBE2D1.

It is found in the cell projection. It localises to the axon. The protein resides in the cytoplasm. The protein localises to the cytoskeleton. Neurofilaments usually contain three intermediate filament proteins: NEFL, NEFM, and NEFH which are involved in the maintenance of neuronal caliber. May additionally cooperate with the neuronal intermediate filament proteins PRPH and INA to form neuronal filamentous networks. The protein is Neurofilament light polypeptide (NEFL) of Sus scrofa (Pig).